The sequence spans 726 residues: uncharacterized protein (726 aa).

Catalysis depends on charge relay system residues serine 583 and histidine 698.

Belongs to the peptidase S9B family.

This is an uncharacterized protein from Sinorhizobium fredii (strain NBRC 101917 / NGR234).